We begin with the raw amino-acid sequence, 277 residues long: MKRDSGQKLPHVTTRRLLDMKEQGEKIAMLTAYDYTTARILDRSGVDVILVGDSVSNVFSGHNTTLPITIEEMIYHAKAVVRGVQAETSRSMVVIDMPFMSYQLSSEEALRNAGKIMKDNECDAVKMEGGKVVVDTVKRITDVGIPVMGHLGLIPQSIYKFGSYKVRAREQKEAEELLRDAVLLEQAGAFALVLEKIPADLAAEVTRTVGIPTIGIGAGSFCDGQVLVINDMLGLNTEFHPRFVRRYADLDGVIFDAVTGYVDDVRNGQFPAEDESY.

The Mg(2+) site is built by Asp53 and Asp96. 3-methyl-2-oxobutanoate contacts are provided by residues 53 to 54, Asp96, and Lys126; that span reads DS. Position 128 (Glu128) interacts with Mg(2+). The Proton acceptor role is filled by Glu195.

This sequence belongs to the PanB family. Homodecamer; pentamer of dimers. The cofactor is Mg(2+).

The protein resides in the cytoplasm. It catalyses the reaction 3-methyl-2-oxobutanoate + (6R)-5,10-methylene-5,6,7,8-tetrahydrofolate + H2O = 2-dehydropantoate + (6S)-5,6,7,8-tetrahydrofolate. It participates in cofactor biosynthesis; (R)-pantothenate biosynthesis; (R)-pantoate from 3-methyl-2-oxobutanoate: step 1/2. Functionally, catalyzes the reversible reaction in which hydroxymethyl group from 5,10-methylenetetrahydrofolate is transferred onto alpha-ketoisovalerate to form ketopantoate. In Chlorobium phaeobacteroides (strain BS1), this protein is 3-methyl-2-oxobutanoate hydroxymethyltransferase.